The following is a 135-amino-acid chain: Small ribosomal subunit protein bS16m (135 aa).

The transit peptide at Met-1–Ile-34 directs the protein to the mitochondrion. Thr-130 is subject to Phosphothreonine.

The protein belongs to the bacterial ribosomal protein bS16 family. Component of the mitochondrial ribosome small subunit (28S) which comprises a 12S rRNA and about 30 distinct proteins.

The protein resides in the mitochondrion. This is Small ribosomal subunit protein bS16m (MRPS16) from Bos taurus (Bovine).